The primary structure comprises 660 residues: DNA topoisomerase I, plasmid (660 aa).

Positions 1 to 110 (MKLMIIESPG…LRVTFNEITA (110 aa)) constitute a Toprim domain. Residues E7 and D79 each coordinate Mg(2+). The Topo IA-type catalytic domain maps to 124-550 (DVKRVAAQEA…KVHDQLNMEL (427 aa)). The segment at 158-163 (SAGRVQ) is interaction with DNA. Y287 (O-(5'-phospho-DNA)-tyrosine intermediate) is an active-site residue. C4-type zinc fingers lie at residues 563 to 589 (CQEC…YPDC) and 613 to 643 (CVKC…KEGC).

This sequence belongs to the type IA topoisomerase family. In terms of assembly, monomer. Mg(2+) is required as a cofactor.

The catalysed reaction is ATP-independent breakage of single-stranded DNA, followed by passage and rejoining.. Releases the supercoiling and torsional tension of DNA, which is introduced during the DNA replication and transcription, by transiently cleaving and rejoining one strand of the DNA duplex. Introduces a single-strand break via transesterification at a target site in duplex DNA. The scissile phosphodiester is attacked by the catalytic tyrosine of the enzyme, resulting in the formation of a DNA-(5'-phosphotyrosyl)-enzyme intermediate and the expulsion of a 3'-OH DNA strand. The free DNA strand then undergoes passage around the unbroken strand, thus removing DNA supercoils. Finally, in the religation step, the DNA 3'-OH attacks the covalent intermediate to expel the active-site tyrosine and restore the DNA phosphodiester backbone. In Xylella fastidiosa (strain 9a5c), this protein is DNA topoisomerase I, plasmid.